A 200-amino-acid chain; its full sequence is Small ribosomal subunit protein uS4 (200 aa).

The 64-residue stretch at 92–155 folds into the S4 RNA-binding domain; sequence SRLDAVVYSL…QNLDIIKESV (64 aa).

The protein belongs to the universal ribosomal protein uS4 family. As to quaternary structure, part of the 30S ribosomal subunit. Contacts protein S5. The interaction surface between S4 and S5 is involved in control of translational fidelity.

Its function is as follows. One of the primary rRNA binding proteins, it binds directly to 16S rRNA where it nucleates assembly of the body of the 30S subunit. In terms of biological role, with S5 and S12 plays an important role in translational accuracy. This chain is Small ribosomal subunit protein uS4, found in Staphylococcus epidermidis (strain ATCC 35984 / DSM 28319 / BCRC 17069 / CCUG 31568 / BM 3577 / RP62A).